Reading from the N-terminus, the 200-residue chain is Recombination protein RecR (200 aa).

The C4-type zinc finger occupies 57–72 (CSECRTFTEEDTCAIC). Residues 81–176 (GEMCIVESPA…PASRIAHGVP (96 aa)) form the Toprim domain.

It belongs to the RecR family.

Its function is as follows. May play a role in DNA repair. It seems to be involved in an RecBC-independent recombinational process of DNA repair. It may act with RecF and RecO. The sequence is that of Recombination protein RecR from Aliivibrio fischeri (strain ATCC 700601 / ES114) (Vibrio fischeri).